A 391-amino-acid polypeptide reads, in one-letter code: MDQCVTVERELEKVLHKFSGYGQLCERGLEELIDYTGGLKHEILQSHGQDAELSGTLSLVLTQCCKRIKDTVQKLASDHKDIHSSVSRVGKAIDKNFDSDISSVGIDGCWQADSQRLLNEVMVEHFFRQGMLDVAEELCQESGLSVDPSQKEPFVELNRILEALKVRVLRPALEWAVSNREMLIAQNSSLEFKLHRLYFISLLMGGTTNQREALQYAKNFQPFALNHQKDIQVLMGSLVYLRQGIENSPYVHLLDANQWADICDIFTRDACALLGLSVESPLSVSFSAGCVALPALINIKAVIEQRQCTGVWNQKDELPIEVDLGKKCWYHSIFACPILRQQTTDNNPPMKLVCGHIISRDALNKMFNGSKLKCPYCPMEQSPGDAKQIFF.

M1 carries the post-translational modification N-acetylmethionine. The 33-residue stretch at 114–146 (SQRLLNEVMVEHFFRQGMLDVAEELCQESGLSV) folds into the LisH domain. The region spanning 153–210 (PFVELNRILEALKVRVLRPALEWAVSNREMLIAQNSSLEFKLHRLYFISLLMGGTTNQ) is the CTLH domain. An RING-Gid-type zinc finger spans residues 336-377 (CPILRQQTTDNNPPMKLVCGHIISRDALNKMFNGSKLKCPYC).

As to quaternary structure, identified in the CTLH complex that contains GID4, RANBP9 and/or RANBP10, MKLN1, MAEA, RMND5A (or alternatively its paralog RMND5B), GID8, ARMC8, WDR26 and YPEL5. Within this complex, MAEA, RMND5A (or alternatively its paralog RMND5B), GID8, WDR26, and RANBP9 and/or RANBP10 form the catalytic core, while GID4, MKLN1, ARMC8 and YPEL5 have ancillary roles.

The protein localises to the nucleus. It localises to the nucleoplasm. It is found in the cytoplasm. It catalyses the reaction S-ubiquitinyl-[E2 ubiquitin-conjugating enzyme]-L-cysteine + [acceptor protein]-L-lysine = [E2 ubiquitin-conjugating enzyme]-L-cysteine + N(6)-ubiquitinyl-[acceptor protein]-L-lysine.. Core component of the CTLH E3 ubiquitin-protein ligase complex that selectively accepts ubiquitin from UBE2H and mediates ubiquitination and subsequent proteasomal degradation of the transcription factor HBP1. MAEA and RMND5A are both required for catalytic activity of the CTLH E3 ubiquitin-protein ligase complex. Catalytic activity of the complex is required for normal cell proliferation. The CTLH E3 ubiquitin-protein ligase complex is not required for the degradation of enzymes involved in gluconeogenesis, such as FBP1. The polypeptide is E3 ubiquitin-protein ligase RMND5A (Rmnd5a) (Mus musculus (Mouse)).